A 398-amino-acid polypeptide reads, in one-letter code: Probable beta-1,3-galactosyltransferase 5 (398 aa).

The chain crosses the membrane as a helical; Signal-anchor for type II membrane protein span at residues Leu-11–Thr-31. Asn-110, Asn-115, and Asn-206 each carry an N-linked (GlcNAc...) asparagine glycan.

This sequence belongs to the glycosyltransferase 31 family. It depends on Mn(2+) as a cofactor.

The protein resides in the golgi apparatus membrane. The protein operates within protein modification; protein glycosylation. Beta-1,3-galactosyltransferase that transfers galactose from UDP-galactose to substrates with a terminal glycosyl residue. This Arabidopsis thaliana (Mouse-ear cress) protein is Probable beta-1,3-galactosyltransferase 5 (B3GALT5).